A 520-amino-acid chain; its full sequence is Probable methylmalonate-semialdehyde/malonate-semialdehyde dehydrogenase [acylating], mitochondrial (520 aa).

6 residues coordinate NAD(+): Ala169, Phe171, Lys195, Glu198, Arg199, and Ser248. Cys303 acts as the Nucleophile in catalysis. Glu403 is a binding site for NAD(+).

The protein belongs to the aldehyde dehydrogenase family. In terms of assembly, homotetramer.

It localises to the mitochondrion. The enzyme catalyses 2-methyl-3-oxopropanoate + NAD(+) + CoA + H2O = propanoyl-CoA + hydrogencarbonate + NADH + H(+). It catalyses the reaction 3-oxopropanoate + NAD(+) + CoA + H2O = hydrogencarbonate + acetyl-CoA + NADH + H(+). Probable malonate and methylmalonate semialdehyde dehydrogenase involved in the catabolism of valine, thymine, and compounds catabolized by way of beta-alanine, including uracil and cytidine. The protein is Probable methylmalonate-semialdehyde/malonate-semialdehyde dehydrogenase [acylating], mitochondrial of Drosophila pseudoobscura pseudoobscura (Fruit fly).